A 444-amino-acid polypeptide reads, in one-letter code: Argininosuccinate synthase (444 aa).

Residues Ala18–Ser26 and Ala44 each bind ATP. An L-citrulline-binding site is contributed by Tyr100. Residues Gly130 and Thr132 each coordinate ATP. L-aspartate is bound by residues Thr132, Asn136, and Asp137. Asn136 contributes to the L-citrulline binding site. Residue Asp137 coordinates ATP. L-citrulline-binding residues include Arg140 and Ser193. Asp195 provides a ligand contact to ATP. L-citrulline-binding residues include Thr202, Glu204, and Glu281.

It belongs to the argininosuccinate synthase family. Type 2 subfamily. As to quaternary structure, homotetramer.

It is found in the cytoplasm. The enzyme catalyses L-citrulline + L-aspartate + ATP = 2-(N(omega)-L-arginino)succinate + AMP + diphosphate + H(+). It participates in amino-acid biosynthesis; L-arginine biosynthesis; L-arginine from L-ornithine and carbamoyl phosphate: step 2/3. The chain is Argininosuccinate synthase from Mannheimia succiniciproducens (strain KCTC 0769BP / MBEL55E).